The following is a 757-amino-acid chain: 5-methyltetrahydropteroyltriglutamate--homocysteine methyltransferase (757 aa).

5-methyltetrahydropteroyltri-L-glutamate is bound by residues 15 to 18 and Lys-114; that span reads RELK. L-homocysteine-binding positions include 428 to 430 and Glu-481; that span reads IGS. L-methionine is bound by residues 428-430 and Glu-481; that span reads IGS. Residues 512–513 and Trp-558 contribute to the 5-methyltetrahydropteroyltri-L-glutamate site; that span reads RC. Asp-596 provides a ligand contact to L-homocysteine. Residue Asp-596 coordinates L-methionine. A 5-methyltetrahydropteroyltri-L-glutamate-binding site is contributed by Glu-602. 3 residues coordinate Zn(2+): His-639, Cys-641, and Glu-663. Residue His-692 is the Proton donor of the active site. Cys-724 is a Zn(2+) binding site.

Belongs to the vitamin-B12 independent methionine synthase family. The cofactor is Zn(2+).

It catalyses the reaction 5-methyltetrahydropteroyltri-L-glutamate + L-homocysteine = tetrahydropteroyltri-L-glutamate + L-methionine. The protein operates within amino-acid biosynthesis; L-methionine biosynthesis via de novo pathway; L-methionine from L-homocysteine (MetE route): step 1/1. Its function is as follows. Catalyzes the transfer of a methyl group from 5-methyltetrahydrofolate to homocysteine resulting in methionine formation. The chain is 5-methyltetrahydropteroyltriglutamate--homocysteine methyltransferase from Lactococcus lactis subsp. cremoris (strain SK11).